Consider the following 706-residue polypeptide: mRNA (2'-O-methyladenosine-N(6)-)-methyltransferase (706 aa).

The disordered stretch occupies residues methionine 1–valine 34. Polar residues predominate over residues leucine 16 to cysteine 29. Serine 30 is subject to Phosphoserine. Positions glutamate 43 to leucine 77 constitute a WW domain. Positions glycine 88–proline 148 are disordered. The Nuclear localization signal signature appears at lysine 109–arginine 113. Serine 116 carries the phosphoserine modification. Over residues isoleucine 132–isoleucine 147 the composition is skewed to low complexity. The residue at position 152 (threonine 152) is a Phosphothreonine. 2 residues coordinate substrate: arginine 234 and arginine 264. An S-adenosyl-L-methionine-binding site is contributed by asparagine 552–phenylalanine 555. Substrate contacts are provided by residues glutamate 557 and tryptophan 587–proline 591. Position 613–615 (phenylalanine 613–histidine 615) interacts with S-adenosyl-L-methionine. The tract at residues threonine 663 to threonine 706 is disordered. The Nuclear localization signal motif lies at glutamine 668 to serine 686. The segment covering serine 675–serine 686 has biased composition (low complexity). Residues glutamate 687–threonine 706 are compositionally biased toward basic and acidic residues.

The protein belongs to the CAPAM family. As to quaternary structure, interacts with POLR2A; interacts with the phosphorylated C-terminal domain (CTD) of POLR2A.

It is found in the nucleus. It carries out the reaction a 5'-end (N(7)-methyl 5'-triphosphoguanosine)-(2'-O-methyladenosine) in mRNA + S-adenosyl-L-methionine = a 5'-end (N(7)-methyl 5'-triphosphoguanosine)-(N(6),2'-O-dimethyladenosine) in mRNA + S-adenosyl-L-homocysteine + H(+). With respect to regulation, cap-specific adenosine methyltransferase activity is inhibited by zinc. Its function is as follows. Cap-specific adenosine methyltransferase that catalyzes formation of N(6),2'-O-dimethyladenosine cap (m6A(m)) by methylating the adenosine at the second transcribed position of capped mRNAs. Recruited to the early elongation complex of RNA polymerase II (RNAPII) via interaction with POLR2A and mediates formation of m6A(m) co-transcriptionally. In Mus musculus (Mouse), this protein is mRNA (2'-O-methyladenosine-N(6)-)-methyltransferase.